Reading from the N-terminus, the 510-residue chain is Maturase K (510 aa).

It belongs to the intron maturase 2 family. MatK subfamily.

Its subcellular location is the plastid. The protein localises to the chloroplast. Its function is as follows. Usually encoded in the trnK tRNA gene intron. Probably assists in splicing its own and other chloroplast group II introns. This is Maturase K from Spirodela intermedia (Intermediate duckweed).